The sequence spans 287 residues: MAQEKMELDLELPPGTGGSPAEGGGSGGGGGLRRSNSAPLIHGLSDTSPVFQAEAPSARRNSTTFPSRHGLLLPASPVRMHSSRLHQIKQEEGMDLINRETVHEREVQTAMQISHSWEESFSLSDNDVEKSASPKRIDFIPVSPAPSPTRGIGKQCFSPSLQSFVSSNGLPPSPIPSPTTRFTTRRSQSPINCIRPSVLGPLKRKCEMETEYQPKRFFQGITNMLSSDVAQLSDPGVCVSSDTLDGNSSSAGSSCNSPAKVSTTTDSPVSPAQAASPFIPLDELSSK.

Positions 1-44 (MAQEKMELDLELPPGTGGSPAEGGGSGGGGGLRRSNSAPLIHGL) are disordered. Over residues 15–32 (GTGGSPAEGGGSGGGGGL) the composition is skewed to gly residues. The residue at position 35 (serine 35) is a Phosphoserine. The residue at position 37 (serine 37) is a Phosphoserine; by CHEK1. Residue serine 45 is modified to Phosphoserine. At threonine 47 the chain carries Phosphothreonine. A phosphoserine mark is found at serine 48, serine 62, and serine 76. Residue lysine 89 forms a Glycyl lysine isopeptide (Lys-Gly) (interchain with G-Cter in SUMO1) linkage. Residues serine 143 and serine 147 each carry the phosphoserine modification. Threonine 149 carries the post-translational modification Phosphothreonine. Disordered regions lie at residues 167-189 (SNGLPPSPIPSPTTRFTTRRSQS) and 236-287 (GVCV…LSSK). Composition is skewed to low complexity over residues 178 to 189 (PTTRFTTRRSQS) and 246 to 257 (GNSSSAGSSCNS). Phosphoserine occurs at positions 187 and 189. The segment covering 259 to 270 (AKVSTTTDSPVS) has biased composition (polar residues). Serine 267, serine 270, and serine 276 each carry phosphoserine.

This sequence belongs to the FAM122 family. Interacts with PPP2CA and PPP2R1A. Interacts (via its N-terminus) with PPP2R2A; the interaction is direct and this interaction inhibits PP2A activity. The CHEK1-mediated Ser-37 phosphorylated form interacts with 14-3-3 proteins. Post-translationally, CHEK1-mediated phosphorylation at Ser-37 negatively regulates its ability to inhibit serine/threonine-protein phosphatase 2A (PP2A) activity. Phosphorylation leads to its release from the PP2A complex and its sequestration by 14-3-3 proteins in the cytoplasm resulting in its inability to translocate to the nucleus, where it otherwise inhibits PP2A.

It localises to the nucleus. Its subcellular location is the cytoplasm. Its function is as follows. Acts as an inhibitor of serine/threonine-protein phosphatase 2A (PP2A) activity. Inhibits PP2A activity by blocking the substrate binding site on PPP2R2A and the active site of PPP2CA. Potentiates ubiquitin-mediated proteasomal degradation of serine/threonine-protein phosphatase 2A catalytic subunit alpha (PPP2CA). Inhibits PP2A-mediated dephosphorylation of WEE1, promoting ubiquitin-mediated proteolysis of WEE1, thereby releasing G2/M checkpoint. The polypeptide is PPP2R1A-PPP2R2A-interacting phosphatase regulator 1 (Homo sapiens (Human)).